A 692-amino-acid polypeptide reads, in one-letter code: Protein arginine N-methyltransferase 7 (692 aa).

SAM-dependent MTase PRMT-type domains follow at residues Ser-14–Trp-345 and Arg-358–Glu-684. Arg-32 carries the omega-N-methylarginine modification. Residues Glu-144 and Glu-153 contribute to the active site.

Belongs to the class I-like SAM-binding methyltransferase superfamily. Protein arginine N-methyltransferase family. PRMT7 subfamily. Homodimer and heterodimer. Interacts with CTCFL. Interacts with PRMT5 and SNRPD3.

The protein localises to the cytoplasm. Its subcellular location is the cytosol. The protein resides in the nucleus. The catalysed reaction is L-arginyl-[protein] + S-adenosyl-L-methionine = N(omega)-methyl-L-arginyl-[protein] + S-adenosyl-L-homocysteine + H(+). Arginine methyltransferase that can both catalyze the formation of omega-N monomethylarginine (MMA) and symmetrical dimethylarginine (sDMA), with a preference for the formation of MMA. Specifically mediates the symmetrical dimethylation of arginine residues in the small nuclear ribonucleoproteins Sm D1 (SNRPD1) and Sm D3 (SNRPD3); such methylation being required for the assembly and biogenesis of snRNP core particles. Specifically mediates the symmetric dimethylation of histone H4 'Arg-3' to form H4R3me2s. Plays a role in gene imprinting by being recruited by CTCFL at the H19 imprinted control region (ICR) and methylating histone H4 to form H4R3me2s, possibly leading to recruit DNA methyltransferases at these sites. May also play a role in embryonic stem cell (ESC) pluripotency. Also able to mediate the arginine methylation of histone H2A and myelin basic protein (MBP) in vitro; the relevance of such results is however unclear in vivo. The chain is Protein arginine N-methyltransferase 7 (PRMT7) from Homo sapiens (Human).